The primary structure comprises 174 residues: 3-hydroxyanthranilate 3,4-dioxygenase (174 aa).

R47 lines the O2 pocket. The Fe cation site is built by H51, E57, and H95. Substrate is bound at residue E57. Substrate-binding residues include R99 and E110. Positions 125, 128, 162, and 165 each coordinate Fe cation.

Belongs to the 3-HAO family. As to quaternary structure, homodimer. Fe(2+) serves as cofactor.

It carries out the reaction 3-hydroxyanthranilate + O2 = (2Z,4Z)-2-amino-3-carboxymuconate 6-semialdehyde. It functions in the pathway cofactor biosynthesis; NAD(+) biosynthesis; quinolinate from L-kynurenine: step 3/3. Functionally, catalyzes the oxidative ring opening of 3-hydroxyanthranilate to 2-amino-3-carboxymuconate semialdehyde, which spontaneously cyclizes to quinolinate. The chain is 3-hydroxyanthranilate 3,4-dioxygenase from Paraburkholderia phytofirmans (strain DSM 17436 / LMG 22146 / PsJN) (Burkholderia phytofirmans).